The sequence spans 156 residues: MSRRNAAEKRPVLPDPQFNSRLATMMVSRLMQHGKKSTAQRILSDAFGLINERTGGDPLELFETAVKNATPLVEVRARRVGGATYQVPMEVRQERGTAMALRWLVSFSRARNGRSMAQKLAGELMDAANEAGSAVRKREETHKMAEANKAFAHYRY.

This sequence belongs to the universal ribosomal protein uS7 family. In terms of assembly, part of the 30S ribosomal subunit. Contacts proteins S9 and S11.

Its function is as follows. One of the primary rRNA binding proteins, it binds directly to 16S rRNA where it nucleates assembly of the head domain of the 30S subunit. Is located at the subunit interface close to the decoding center, probably blocks exit of the E-site tRNA. This is Small ribosomal subunit protein uS7 from Parasynechococcus marenigrum (strain WH8102).